We begin with the raw amino-acid sequence, 338 residues long: Glyceraldehyde-3-phosphate dehydrogenase 2 (338 aa).

Residues 13–14 and G111 contribute to the NAD(+) site; that span reads TI. A D-glyceraldehyde 3-phosphate-binding site is contributed by 140-142; sequence SCN. C141 (nucleophile) is an active-site residue. R169 provides a ligand contact to NAD(+). Residue 195 to 196 participates in D-glyceraldehyde 3-phosphate binding; that stretch reads HG. Q300 is a binding site for NAD(+).

This sequence belongs to the glyceraldehyde-3-phosphate dehydrogenase family. In terms of assembly, homotetramer.

Its subcellular location is the cytoplasm. The enzyme catalyses D-glyceraldehyde 3-phosphate + phosphate + NADP(+) = (2R)-3-phospho-glyceroyl phosphate + NADPH + H(+). The catalysed reaction is D-glyceraldehyde 3-phosphate + phosphate + NAD(+) = (2R)-3-phospho-glyceroyl phosphate + NADH + H(+). It functions in the pathway carbohydrate degradation; glycolysis; pyruvate from D-glyceraldehyde 3-phosphate: step 1/5. The protein is Glyceraldehyde-3-phosphate dehydrogenase 2 of Methanosarcina barkeri (strain Fusaro / DSM 804).